The sequence spans 154 residues: Aspartate carbamoyltransferase regulatory chain (154 aa).

Positions 109, 114, 138, and 141 each coordinate Zn(2+).

It belongs to the PyrI family. In terms of assembly, contains catalytic and regulatory chains. Zn(2+) is required as a cofactor.

Functionally, involved in allosteric regulation of aspartate carbamoyltransferase. The polypeptide is Aspartate carbamoyltransferase regulatory chain (Methanothrix thermoacetophila (strain DSM 6194 / JCM 14653 / NBRC 101360 / PT) (Methanosaeta thermophila)).